A 204-amino-acid chain; its full sequence is LexA repressor (204 aa).

A DNA-binding region (H-T-H motif) is located at residues 28 to 48 (RAEIAQELGFKSPNAAEEHLK). Active-site for autocatalytic cleavage activity residues include S125 and K162.

The protein belongs to the peptidase S24 family. In terms of assembly, homodimer.

The enzyme catalyses Hydrolysis of Ala-|-Gly bond in repressor LexA.. In terms of biological role, represses a number of genes involved in the response to DNA damage (SOS response), including recA and lexA. In the presence of single-stranded DNA, RecA interacts with LexA causing an autocatalytic cleavage which disrupts the DNA-binding part of LexA, leading to derepression of the SOS regulon and eventually DNA repair. The sequence is that of LexA repressor from Pseudomonas aeruginosa (strain LESB58).